A 123-amino-acid chain; its full sequence is UPF0295 protein Bcer98_0460 (123 aa).

Transmembrane regions (helical) follow at residues 12–32 (IRTF…LGVF) and 43–63 (FMML…WIGM).

The protein belongs to the UPF0295 family.

The protein localises to the cell membrane. The polypeptide is UPF0295 protein Bcer98_0460 (Bacillus cytotoxicus (strain DSM 22905 / CIP 110041 / 391-98 / NVH 391-98)).